The primary structure comprises 359 residues: 4-galactosyl-N-acetylglucosaminide 3-alpha-L-fucosyltransferase 9 (359 aa).

Over 1–11 (MTSTSKGILRP) the chain is Cytoplasmic. Residues 12-32 (FLIVCIILGCFMACLLIYIKP) traverse the membrane as a helical; Signal-anchor for type II membrane protein segment. At 33 to 359 (TNSWVFSPME…VGNLEKWFWN (327 aa)) the chain is on the lumenal side. Asn62 is a glycosylation site (N-linked (GlcNAc...) asparagine). The segment at 63 to 168 (ETTILVWVWP…RRDSDIQVPY (106 aa)) is acceptor-binding. Gln75 lines the a beta-D-galactosyl-(1-&gt;4)-N-acetyl-beta-D-glucosaminyl derivative pocket. Disulfide bonds link Cys82–Cys335, Cys91–Cys338, and Cys190–Cys238. N-linked (GlcNAc...) asparagine glycosylation is present at Asn101. Glu137 lines the a beta-D-galactosyl-(1-&gt;4)-N-acetyl-beta-D-glucosaminyl derivative pocket. Glu137 functions as the Nucleophile in the catalytic mechanism. Position 137 (Glu137) interacts with GDP-beta-L-fucose. Asn153 carries an N-linked (GlcNAc...) asparagine glycan. Positions 168, 192, 194, 195, 202, 226, 241, 246, 252, 255, and 256 each coordinate GDP-beta-L-fucose. A donor-binding region spans residues 169 to 326 (GFLTVSTNPF…NWRKDFTVNL (158 aa)). The segment at 327–359 (PRFWESHACLACDHVKRHQEYKSVGNLEKWFWN) is acceptor-binding.

This sequence belongs to the glycosyltransferase 10 family. Homodimer. Post-translationally, N-glycosylated with complex-type N-glycans. As to expression, mainly detected in brain and kidney.

It is found in the golgi apparatus. It localises to the trans-Golgi network membrane. The protein resides in the golgi apparatus membrane. The enzyme catalyses a beta-D-galactosyl-(1-&gt;4)-N-acetyl-beta-D-glucosaminyl derivative + GDP-beta-L-fucose = a beta-D-galactosyl-(1-&gt;4)-[alpha-L-fucosyl-(1-&gt;3)]-N-acetyl-beta-D-glucosaminyl derivative + GDP + H(+). It catalyses the reaction an alpha-Neu5Ac-(2-&gt;3)-beta-D-Gal-(1-&gt;4)-beta-D-GlcNAc-(1-&gt;3)-beta-D-Gal-(1-&gt;4)-beta-D-GlcNAc derivative + GDP-beta-L-fucose = an alpha-Neu5Ac-(2-&gt;3)-beta-D-Gal-(1-&gt;4)-beta-D-GlcNAc-(1-&gt;3)-beta-D-Gal-(1-&gt;4)-[alpha-L-Fuc-(1-&gt;3)]-beta-D-GlcNAc derivative + GDP + H(+). The catalysed reaction is alpha-N-glycoloylneuraminosyl-(2-&gt;3)-beta-D-galactosyl-(1-&gt;4)-N-acetyl-beta-D-glucosaminyl-(1-&gt;3)-beta-D-galactosyl-(1-&gt;4)-N-acetyl-beta-D-glucosaminyl-(1-&gt;3)-beta-D-galactosyl-(1-&gt;4)-beta-D-glucosyl-(1&lt;-&gt;1')-ceramide + GDP-beta-L-fucose = alpha-N-glycoloylneuraminosyl-(2-&gt;3)-beta-D-galactosyl-(1-&gt;4)-N-acetyl-beta-D-glucosaminyl-(1-&gt;3)-beta-D-galactosyl-(1-&gt;4)-[alpha-L-fucosyl-(1-&gt;3)]-N-acetyl-beta-D-glucosaminyl-(1-&gt;3)-beta-D-galactosyl-(1-&gt;4)-beta-D-glucosyl-(1&lt;-&gt;1')-ceramide + GDP + H(+). It carries out the reaction alpha-D-galactosyl-(1-&gt;3)-beta-D-galactosyl-(1-&gt;4)-N-acetyl-beta-D-glucosaminyl-(1-&gt;3)-beta-D-galactosyl-(1-&gt;4)-beta-D-glucosyl-(1&lt;-&gt;1')-ceramide + GDP-beta-L-fucose = a neolactoside IV(3)-alpha-Gal,III(3)-alpha-Fuc-nLc4Cer + GDP + H(+). The enzyme catalyses a neolactoside nLc4Cer + GDP-beta-L-fucose = a neolactoside III(3)-alpha-Fuc-nLc4Cer + GDP + H(+). It catalyses the reaction an N-acetyl-alpha-neuraminyl-(2-&gt;3)-beta-D-galactosyl-(1-&gt;4)-N-acetyl-beta-D-glucosaminyl derivative + GDP-beta-L-fucose = an alpha-Neu5Ac-(2-&gt;3)-beta-D-Gal-(1-&gt;4)-[alpha-L-Fuc-(1-&gt;3)]-beta-D-GlcNAc derivative + GDP + H(+). The catalysed reaction is beta-D-Gal-(1-&gt;4)-beta-D-GlcNAc-(1-&gt;3)-beta-D-Gal-(1-&gt;4)-D-Glc + GDP-beta-L-fucose = beta-D-Gal-(1-&gt;4)-[alpha-L-Fuc-(1-&gt;3)]-beta-D-GlcNAc-(1-&gt;3)-beta-D-Gal-(1-&gt;4)-D-Glc + GDP + H(+). It carries out the reaction an alpha-L-Fuc-(1-&gt;2)-beta-D-Gal-(1-&gt;4)-beta-D-GlcNAc derivative + GDP-beta-L-fucose = an alpha-L-Fuc-(1-&gt;2)-beta-D-Gal-(1-&gt;4)-[alpha-L-Fuc-(1-&gt;3)]-beta-D-GlcNAc derivative + GDP + H(+). The protein operates within protein modification; protein glycosylation. Its pathway is glycolipid biosynthesis. With respect to regulation, activated by Mn2+. Catalyzes alpha(1-&gt;3) linkage of fucosyl moiety transferred from GDP-beta-L-fucose to N-acetyl glucosamine (GlcNAc) within type 2 lactosamine (LacNAc, beta-D-Gal-(1-&gt;4)-beta-D-GlcNAc-) glycan attached to glycolipids and N- or O-linked glycoproteins. Fucosylates distal type 2 LacNAc and its fucosylated (H-type 2 LacNAc) and sialylated (sialyl-type 2 LacNAc) derivatives to form Lewis x (Lex) (CD15) and Lewis y (Ley) antigenic epitopes involved in cell adhesion and differentiation. Generates Lex epitopes in the brain, presumably playing a role in the maintenance of neuronal stemness and neurite outgrowth in progenitor neural cells. Fucosylates the internal type 2 LacNAc unit of the polylactosamine chain to form VIM-2 antigen that serves as recognition epitope for SELE. Can also modify milk oligosaccharides in particular type 2 tetrasaccharide LNnT. This Mus musculus (Mouse) protein is 4-galactosyl-N-acetylglucosaminide 3-alpha-L-fucosyltransferase 9.